The sequence spans 344 residues: Putative F-box/kelch-repeat protein At1g19930 (344 aa).

The F-box domain maps to 8–54 (TELIFSLPNDLLVNILARVSRLDYPILSLVSKRFSSVLTLPELYQTR). Kelch repeat units follow at residues 122 to 168 (NIYN…LLDG), 170 to 195 (IYVT…VDGK), 196 to 241 (LHSC…YYYY), and 243 to 276 (NENI…NVRL).

This chain is Putative F-box/kelch-repeat protein At1g19930, found in Arabidopsis thaliana (Mouse-ear cress).